Reading from the N-terminus, the 151-residue chain is MKSMLVHIVLVIFIIAEFSTAETDHDKNRRGANMGLYAFPRVGRSDPSLANSLRDGLEAGVLDGIYGDASQEDYNEADFQKKASGLVAFPRVGRGDAELRKWAHLLALQQVLDKRTGPSASSGLWFGPRLGKRSVDAKSFADISKGQKELN.

The first 21 residues, 1 to 21 (MKSMLVHIVLVIFIIAEFSTA), serve as a signal peptide directing secretion. Positions 22–28 (ETDHDKN) are excised as a propeptide. Valine 42 carries the post-translational modification Valine amide. A propeptide spanning residues 45 to 80 (SDPSLANSLRDGLEAGVLDGIYGDASQEDYNEADFQ) is cleaved from the precursor. Valine 92 bears the Valine amide mark. A propeptide spanning residues 95 to 113 (GDAELRKWAHLLALQQVLD) is cleaved from the precursor. At leucine 130 the chain carries Leucine amide. A propeptide spanning residues 134 to 151 (SVDAKSFADISKGQKELN) is cleaved from the precursor.

Belongs to the pyrokinin family. As to expression, in larvae, the precursor peptide is exclusively present in a single pair of neuroendocrine cells in the labial neuromere (subesophageal ganglion) and three pairs of cells in the ventral ganglion abdominal neuromeres.

Its subcellular location is the secreted. Functionally, CAP-1 and CAP-2, but not CAP-3 are ligands for the Capa receptor. CAP-1 and CAP-2 are probably components of the signal transduction pathway that leads to Malpighian tubule fluid secretion via the second messenger nitric oxide. CAP-3 is a ligand for the PK1-R G-protein coupled receptor. The polypeptide is Cardio acceleratory peptide 2b (Capa) (Drosophila melanogaster (Fruit fly)).